Consider the following 129-residue polypeptide: Ribosome-binding factor A (129 aa).

Belongs to the RbfA family. Monomer. Binds 30S ribosomal subunits, but not 50S ribosomal subunits or 70S ribosomes.

It localises to the cytoplasm. In terms of biological role, one of several proteins that assist in the late maturation steps of the functional core of the 30S ribosomal subunit. Associates with free 30S ribosomal subunits (but not with 30S subunits that are part of 70S ribosomes or polysomes). Required for efficient processing of 16S rRNA. May interact with the 5'-terminal helix region of 16S rRNA. This Thermomicrobium roseum (strain ATCC 27502 / DSM 5159 / P-2) protein is Ribosome-binding factor A.